A 370-amino-acid chain; its full sequence is CCA-adding enzyme (370 aa).

Positions 8 and 11 each coordinate ATP. Positions 8 and 11 each coordinate CTP. 2 residues coordinate Mg(2+): Asp-21 and Asp-23. 3 residues coordinate ATP: Arg-91, Arg-137, and Arg-140. CTP is bound by residues Arg-91, Arg-137, and Arg-140.

Belongs to the tRNA nucleotidyltransferase/poly(A) polymerase family. Bacterial CCA-adding enzyme type 2 subfamily. The cofactor is Mg(2+).

It carries out the reaction a tRNA precursor + 2 CTP + ATP = a tRNA with a 3' CCA end + 3 diphosphate. The enzyme catalyses a tRNA with a 3' CCA end + 2 CTP + ATP = a tRNA with a 3' CCACCA end + 3 diphosphate. In terms of biological role, catalyzes the addition and repair of the essential 3'-terminal CCA sequence in tRNAs without using a nucleic acid template. Adds these three nucleotides in the order of C, C, and A to the tRNA nucleotide-73, using CTP and ATP as substrates and producing inorganic pyrophosphate. tRNA 3'-terminal CCA addition is required both for tRNA processing and repair. Also involved in tRNA surveillance by mediating tandem CCA addition to generate a CCACCA at the 3' terminus of unstable tRNAs. While stable tRNAs receive only 3'-terminal CCA, unstable tRNAs are marked with CCACCA and rapidly degraded. The sequence is that of CCA-adding enzyme from Pseudomonas putida (strain W619).